The sequence spans 204 residues: Urease accessory protein UreG (204 aa).

13–20 (GPVGSGKT) provides a ligand contact to GTP.

It belongs to the SIMIBI class G3E GTPase family. UreG subfamily. Homodimer. UreD, UreF and UreG form a complex that acts as a GTP-hydrolysis-dependent molecular chaperone, activating the urease apoprotein by helping to assemble the nickel containing metallocenter of UreC. The UreE protein probably delivers the nickel.

The protein resides in the cytoplasm. Functionally, facilitates the functional incorporation of the urease nickel metallocenter. This process requires GTP hydrolysis, probably effectuated by UreG. The protein is Urease accessory protein UreG of Acinetobacter baumannii (strain AB307-0294).